Here is an 818-residue protein sequence, read N- to C-terminus: Probable beta-glucosidase I (818 aa).

A glycan (N-linked (GlcNAc...) asparagine) is linked at Asn176. The active site involves Asp204. A PA14 domain is found at 374–534 (DGKPGFTFRV…SQEELISNAV (161 aa)). N-linked (GlcNAc...) asparagine glycosylation is found at Asn453 and Asn472.

It belongs to the glycosyl hydrolase 3 family.

It is found in the secreted. It catalyses the reaction Hydrolysis of terminal, non-reducing beta-D-glucosyl residues with release of beta-D-glucose.. The protein operates within glycan metabolism; cellulose degradation. Beta-glucosidases are one of a number of cellulolytic enzymes involved in the degradation of cellulosic biomass. Catalyzes the last step releasing glucose from the inhibitory cellobiose. In Aspergillus niger (strain ATCC MYA-4892 / CBS 513.88 / FGSC A1513), this protein is Probable beta-glucosidase I (bglI).